An 88-amino-acid chain; its full sequence is FAD assembly factor SdhE (88 aa).

The protein belongs to the SdhE FAD assembly factor family. In terms of assembly, monomer. Makes weak or transient interactions with SdhA. Interacts with YgfX. Interacts with FrdA.

It is found in the cytoplasm. Its pathway is antibiotic biosynthesis; prodigiosin biosynthesis. Functionally, an FAD assembly protein, which accelerates covalent attachment of the cofactor into other proteins. Plays an essential role in the assembly of succinate dehydrogenase (SDH, respiratory complex II), an enzyme complex that is a component of both the tricarboxylic acid cycle and the electron transport chain, and which couples the oxidation of succinate to fumarate with the reduction of ubiquinone (coenzyme Q) to ubiquinol. Required for flavinylation (covalent attachment of FAD) of the flavoprotein subunit SdhA of SDH. Required for flavinylation of the flavoprotein subunit FrdA of fumarate reductase (FRD). Flavinylation of SDH and FRD occurs in a similar but not identical manner, as site-specific mutations display subtle differences between them. Flavinylates SdhA in vivo in the absence of the other SDH subunits; SdhE mutants that do not flavinylate also interfere with wild-type activity in a possible dominant-negative fashion. Weakly binds to FAD and facilitates its binding to SdhA. Required for production of prodigiosin antibiotic (Pig); overproduction of SdhE in a deletion mutant leads to decreased synthesis of Pig compared to wild-type. Capable of flavinylating A.pasteurianus SdhA when the SDH operon and this gene are expressed in G.oxydans; flavinylation of SdhA is detected only in the presence of sdhE. The chain is FAD assembly factor SdhE from Serratia sp. (strain ATCC 39006) (Prodigiosinella confusarubida).